The sequence spans 552 residues: AP-1-like transcription factor (552 aa).

Polar residues predominate over residues 1–14 (MSGQTETLSSTSNI). The interval 1–99 (MSGQTETLSS…QRAFRKRKED (99 aa)) is disordered. Positions 36–47 (PVSDRSSRRTSS) are enriched in basic and acidic residues. Residues 48–61 (EEVDLMPNVDDEVD) show a composition bias toward acidic residues. Over residues 62–80 (GDVKPKKIGRKNSDQEPSS) the composition is skewed to basic and acidic residues. The bZIP domain maps to 76-139 (QEPSSKRKAQ…RQLEEELRIL (64 aa)). The short motif at 81–88 (KRKAQNRA) is the Nuclear localization signal element. The segment at 81–102 (KRKAQNRAAQRAFRKRKEDHLK) is basic motif. A leucine-zipper region spans residues 104 to 111 (LETQVVTL). The tract at residues 213–244 (QVPPTLVDSNSAQGTLSPETPSSSDSPSNLYL) is disordered. Positions 219–228 (VDSNSAQGTL) are enriched in polar residues. Over residues 229-240 (SPETPSSSDSPS) the composition is skewed to low complexity. Residues 259–290 (CSALSNGENGEDVADGKQFCQKLSTACGSIAC) are n-CRD. Cystine bridges form between Cys278–Cys501 and Cys285–Cys532. The disordered stretch occupies residues 460 to 489 (ISNHPDEVPPDGLPQKGKHDTSSQMPSENE). Residues 501–532 (CPKVWSKIINHPRFESFDIDDLCSKLKNKAKC) are c-CRD. The short motif at 515–533 (ESFDIDDLCSKLKNKAKCS) is the Nuclear export signal element.

Belongs to the bZIP family. YAP subfamily. Homodimer. The reduced form of pap1 interacts in the nucleus with the nuclear export protein crm1, and in the cytoplasm with the peroxiredoxin tpx1. Depending on the oxidative stress inducing agent, pap1 can undergo two distinct conformational changes, both masking the nuclear export signal, thus abolishing nuclear export by crm1/exportin 1. The glutathione-depleting agent diethylmaleate (DEM) leads to the non-reversible modification of at least 2 cysteine residues in the c-CRD. Peroxide stress induces the formation of a tpx1-dependent interdomain disulfide bond between Cys-278 and Cys-501.

The protein resides in the nucleus. Its subcellular location is the cytoplasm. Transcription activator involved in multidrug resistance, oxidative stress response, and redox homeostasis. Regulates the transcription of genes encoding antioxidant enzymes like catalase ctt1 and components of the cellular thiol-reducing pathways, including the thioredoxin system (trx2, trr1), ABC transporters involved in multidrug resistance like bfr1/hba2 and pmd1 as well as the gene obr1/apt1. Preferentially binds to promoters with the core binding site 5'-TTA[CG]TAA-3'. Activity of the transcription factor is controlled through oxidation of specific cysteine residues resulting in the alteration of its subcellular location. Oxidative stress induces nuclear accumulation and as a result pap1 transcriptional activity. Required for sty1/spc1-conferred staurosporine resistance. In Schizosaccharomyces pombe (strain 972 / ATCC 24843) (Fission yeast), this protein is AP-1-like transcription factor (pap1).